The primary structure comprises 179 residues: Peptidyl-tRNA hydrolase 2, mitochondrial (179 aa).

The chain crosses the membrane as a helical span at residues 15 to 37; sequence STLGLAVGVACGMCLGWSLRVCF. Residues Lys-47, Lys-76, Lys-81, Lys-95, Lys-106, Lys-115, Lys-171, and Lys-177 each participate in a glycyl lysine isopeptide (Lys-Gly) (interchain with G-Cter in ubiquitin) cross-link.

The protein belongs to the PTH2 family. Monomer. In terms of processing, ubiquitinated by PRKN during mitophagy, leading to its degradation and enhancement of mitophagy. Deubiquitinated by USP30.

The protein resides in the mitochondrion outer membrane. It catalyses the reaction an N-acyl-L-alpha-aminoacyl-tRNA + H2O = an N-acyl-L-amino acid + a tRNA + H(+). In terms of biological role, peptidyl-tRNA hydrolase which releases tRNAs from the ribosome during protein synthesis. Promotes caspase-independent apoptosis by regulating the function of two transcriptional regulators, AES and TLE1. In Homo sapiens (Human), this protein is Peptidyl-tRNA hydrolase 2, mitochondrial (PTRH2).